The primary structure comprises 618 residues: Proline--tRNA ligase (618 aa).

The protein belongs to the class-II aminoacyl-tRNA synthetase family. ProS type 1 subfamily. As to quaternary structure, homodimer.

Its subcellular location is the cytoplasm. The enzyme catalyses tRNA(Pro) + L-proline + ATP = L-prolyl-tRNA(Pro) + AMP + diphosphate. In terms of biological role, catalyzes the attachment of proline to tRNA(Pro) in a two-step reaction: proline is first activated by ATP to form Pro-AMP and then transferred to the acceptor end of tRNA(Pro). As ProRS can inadvertently accommodate and process non-cognate amino acids such as alanine and cysteine, to avoid such errors it has two additional distinct editing activities against alanine. One activity is designated as 'pretransfer' editing and involves the tRNA(Pro)-independent hydrolysis of activated Ala-AMP. The other activity is designated 'posttransfer' editing and involves deacylation of mischarged Ala-tRNA(Pro). The misacylated Cys-tRNA(Pro) is not edited by ProRS. The protein is Proline--tRNA ligase of Streptococcus pyogenes serotype M2 (strain MGAS10270).